A 406-amino-acid chain; its full sequence is Collagen and calcium-binding EGF domain-containing protein 1 (406 aa).

A signal peptide spans 1-34; that stretch reads MVPPPPSRGGAARGQLGRSLGPLLLLLALGHTWT. The EGF-like; calcium-binding domain maps to 134–175; sequence DIDECASSNGTLCAHICINTLGSYRCECREGYIREDDGKTCT. Disulfide bonds link Cys-138–Cys-150, Cys-146–Cys-159, and Cys-161–Cys-174. A glycan (N-linked (GlcNAc...) asparagine) is linked at Asn-142. A glycan (N-linked (GlcNAc...) asparagine) is linked at Asn-182. Disordered stretches follow at residues 244–335 and 360–406; these read YLPG…PGSF and RTHS…DFYP. 2 Collagen-like domains span residues 245–290 and 300–333; these read LPGP…PMGP and GRRG…GPPG. Positions 270–279 are enriched in pro residues; it reads PGMPGPPGQP. The segment covering 281 to 292 has biased composition (low complexity); it reads PRGSMGPMGPSP. O-linked (Xyl...) (chondroitin sulfate) serine glycosylation occurs at Ser-385. Positions 386-406 are enriched in basic and acidic residues; it reads GDDHPRRTETRDLRAPRDFYP.

The protein belongs to the CCBE1 family. In terms of tissue distribution, detected in fibroblasts and urine (at protein level). Not expressed in blood or lymphatic endothelial cells.

It localises to the secreted. Functionally, required for lymphangioblast budding and angiogenic sprouting from venous endothelium during embryogenesis. The polypeptide is Collagen and calcium-binding EGF domain-containing protein 1 (CCBE1) (Homo sapiens (Human)).